The primary structure comprises 126 residues: Large ribosomal subunit protein bL19 (126 aa).

The protein belongs to the bacterial ribosomal protein bL19 family.

Its function is as follows. This protein is located at the 30S-50S ribosomal subunit interface and may play a role in the structure and function of the aminoacyl-tRNA binding site. The chain is Large ribosomal subunit protein bL19 from Prochlorococcus marinus (strain MIT 9312).